A 237-amino-acid chain; its full sequence is Homeobox protein Nkx-3.1 (237 aa).

Basic and acidic residues predominate over residues 1–14; sequence MLRVAEPREPRVEA. Disordered stretches follow at residues 1–96 and 108–130; these read MLRV…EPES and EHNPGDLASAPQVTKQPQKRSRA. A compositionally biased stretch (polar residues) spans 24-34; it reads PTQSKRLTSFL. 2 stretches are compositionally biased toward basic and acidic residues: residues 38 to 47 and 57 to 71; these read ILRDRAERHG and PDPRRDSAPEPDKAG. The homeobox DNA-binding region spans 125-184; that stretch reads QKRSRAAFSHTQVIELERKFSHQKYLSAPERAHLAKNLKLTETQVKIWFQNRRYKTKRKQ.

It belongs to the NK-3 homeobox family. In terms of assembly, interacts with serum response factor (SRF). Interacts with SPDEF. Interacts with WDR77. Interacts with TOPORS which polyubiquitinates NKX3-1 and induces its proteasomal degradation. Interacts with FEM1B. Ubiquitinated by TOPORS; monoubiquitinated at several residues and also polyubiquitinated on single residues. In terms of tissue distribution, expressed mostly in the male urogenital tract, with highest expression in the epithelial cells lining the ducts of anterior, dorsolateral and ventral prostate and in the bulbourethral gland, and much lower in the seminal vesicle and the testis. Expression in the prostate increases during sexual maturation and is drastically reduced following castration. Expressed also in brain (hippocampus and external granular layer of the cerebral cortex), kidney (intralobular arteries), thymus and adrenal and salivary glands.

The protein resides in the nucleus. Functionally, transcription factor, which binds preferentially the consensus sequence 5'-TAAGT[AG]-3' and can behave as a transcriptional repressor. Plays an important role in normal prostate development, regulating proliferation of glandular epithelium and in the formation of ducts in prostate. Acts as a tumor suppressor controlling prostate carcinogenesis, as shown by the ability to suppress growth and tumorigenicity of prostate carcinoma cells. Plays a role in the formation of minor salivary glands (particularly palatine and lingual glands). The protein is Homeobox protein Nkx-3.1 of Mus musculus (Mouse).